The following is a 263-amino-acid chain: Putative S-adenosyl-L-methionine-dependent methyltransferase Mjls_0079 (263 aa).

Residues Asp121 and 150–151 (ES) each bind S-adenosyl-L-methionine.

Belongs to the UPF0677 family.

Functionally, exhibits S-adenosyl-L-methionine-dependent methyltransferase activity. The chain is Putative S-adenosyl-L-methionine-dependent methyltransferase Mjls_0079 from Mycobacterium sp. (strain JLS).